We begin with the raw amino-acid sequence, 437 residues long: (S)-6-hydroxynicotine oxidase (437 aa).

FAD is bound by residues Ser16, 35–37 (EAR), Arg43, 57–60 (GGAG), Val231, Ser405, and 413–415 (EYI).

This sequence belongs to the flavin monoamine oxidase family. In terms of assembly, homodimer. FAD serves as cofactor.

The enzyme catalyses (S)-6-hydroxynicotine + O2 + H2O = 6-hydroxypseudooxynicotine + H2O2. The catalysed reaction is (S)-6-hydroxynicotine + O2 = 6-hydroxy-N-methylmyosmine + H2O2. The protein operates within alkaloid degradation; nicotine degradation; 6-hydroxypseudooxynicotine from nicotine (S-isomer route): step 2/2. Partially inhibited by Co(2+) or Zn(2+) and significantly inhibited by Ag(+), Cu(2+) and Hg(2+). Functionally, involved in the degradation of L-nicotine. Catalyzes the oxidation of (S)-6-hydroxynicotine (6-hydroxy-L-nicotine) to 6-hydroxypseudooxynicotine. Oxidation of the pyrrolidine ring of (S)-6-hydroxynicotine leads to the formation of the optically inactive 6-hydroxy-N-methylmyosmine, which hydrolyzes spontaneously to 6-hydroxypseudooxynicotine. Acts with absolute stereospecificity on the L-form of 6-hydroxynicotine. Also involved in the degradation of nornicotine, and catalyzes the oxidation of 6-hydroxynornicotine to 6-hydroxymyosmine, which hydrolyzes to 6-hydroxypseudooxynornicotine. In vitro, converts (S)-nicotine into N-methylmyosmine, which spontaneously hydrolyzes spontaneously into pseudooxynicotine, but catalytic efficiency is about 1900-fold higher with (S)-6-hydroxynicotine. The polypeptide is (S)-6-hydroxynicotine oxidase (Shinella sp. (strain HZN7)).